The sequence spans 342 residues: uncharacterized protein (342 aa).

It belongs to the bacterial luciferase oxidoreductase family.

This is an uncharacterized protein from Sinorhizobium fredii (strain NBRC 101917 / NGR234).